The chain runs to 306 residues: Agmatinase (306 aa).

The Mn(2+) site is built by histidine 126, aspartate 149, histidine 151, aspartate 153, aspartate 230, and aspartate 232.

It belongs to the arginase family. Agmatinase subfamily. Requires Mn(2+) as cofactor.

It carries out the reaction agmatine + H2O = urea + putrescine. Its pathway is amine and polyamine biosynthesis; putrescine biosynthesis via agmatine pathway; putrescine from agmatine: step 1/1. Functionally, catalyzes the formation of putrescine from agmatine. This Escherichia coli (strain K12 / DH10B) protein is Agmatinase.